The primary structure comprises 388 residues: Branched-chain-amino-acid aminotransferase 2, chloroplastic (388 aa).

The transit peptide at 1–22 (MIKTITSLRKTLVLPLHLHIRT) directs the protein to the chloroplast. The residue at position 235 (Lys235) is an N6-(pyridoxal phosphate)lysine.

This sequence belongs to the class-IV pyridoxal-phosphate-dependent aminotransferase family. Pyridoxal 5'-phosphate serves as cofactor.

It localises to the plastid. The protein localises to the chloroplast. It catalyses the reaction L-leucine + 2-oxoglutarate = 4-methyl-2-oxopentanoate + L-glutamate. The enzyme catalyses L-isoleucine + 2-oxoglutarate = (S)-3-methyl-2-oxopentanoate + L-glutamate. The catalysed reaction is L-valine + 2-oxoglutarate = 3-methyl-2-oxobutanoate + L-glutamate. It participates in amino-acid biosynthesis; L-isoleucine biosynthesis; L-isoleucine from 2-oxobutanoate: step 4/4. Its pathway is amino-acid biosynthesis; L-leucine biosynthesis; L-leucine from 3-methyl-2-oxobutanoate: step 4/4. The protein operates within amino-acid biosynthesis; L-valine biosynthesis; L-valine from pyruvate: step 4/4. Converts 2-oxo acids to branched-chain amino acids. Shows activity with L-Leu, L-Ile and L-Val as amino donors and 2-oxoglutarate as an amino acceptor, but no activity for D-isomers of Leu, Ile, Val, Asp, Glu or Ala. This is Branched-chain-amino-acid aminotransferase 2, chloroplastic (BCAT2) from Arabidopsis thaliana (Mouse-ear cress).